The primary structure comprises 113 residues: Retrotransposon Gag-like protein 8B (113 aa).

The protein belongs to the FAM127 family.

The chain is Retrotransposon Gag-like protein 8B (RTL8B) from Homo sapiens (Human).